Consider the following 351-residue polypeptide: 2-Hydroxyacid oxidase 2 (351 aa).

In terms of domain architecture, FMN hydroxy acid dehydrogenase spans 2–351 (SLVCLTDFQA…NRNLVQFSRL (350 aa)). Residues 77 to 79 (PTG), Ser-106, and Gln-128 each bind FMN. Tyr-130 contacts a 2-oxocarboxylate. An FMN-binding site is contributed by Thr-156. Arg-165 lines the a 2-oxocarboxylate pocket. Thr-178 is modified (phosphothreonine). An FMN-binding site is contributed by Lys-222. Catalysis depends on His-246, which acts as the Proton acceptor. A 2-oxocarboxylate is bound at residue Arg-249. FMN contacts are provided by residues 277–281 (DGGVR) and 300–301 (GR). The Microbody targeting signal motif lies at 349–351 (SRL).

It belongs to the FMN-dependent alpha-hydroxy acid dehydrogenase family. Homotetramer. It depends on FMN as a cofactor. As to expression, expressed in the liver and kidney.

It is found in the peroxisome. It carries out the reaction a (2S)-2-hydroxycarboxylate + O2 = a 2-oxocarboxylate + H2O2. The catalysed reaction is 2-hydroxyhexadecanoate + O2 = 2-oxohexadecanoate + H2O2. It catalyses the reaction 2-hydroxyoctanoate + O2 = 2-oxooctanoate + H2O2. It participates in lipid metabolism; fatty acid metabolism. In terms of biological role, oxidase that catalyzes the oxidation of medium and long chain hydroxyacids such as 2-hydroxyhexadecanoate and 2-hydroxyoctanoate, to the correspondong 2-oxoacids. Its role in the oxidation of 2-hydroxy fatty acids may contribute to the general pathway of fatty acid alpha-oxidation. Active in vitro with the artificial electron acceptor 2,6-dichlorophenolindophenol (DCIP), but O2 is believed to be the physiological electron acceptor, leading to the production of H2O2. Is not active on glycolate, glyoxylate, L-lactate and 2-hydroxybutanoate. The chain is 2-Hydroxyacid oxidase 2 (HAO2) from Homo sapiens (Human).